We begin with the raw amino-acid sequence, 509 residues long: Transmembrane protein 180 (509 aa).

At 1–10 (MGLRLLACLF) the chain is on the extracellular side. The helical transmembrane segment at 11-42 (HLPTAVIYGSLSLFVSILHNVFLLYYVDTFVS) threads the bilayer. Residues 43–54 (VYKIDKLSFWIG) are Cytoplasmic-facing. Residues 55 to 73 (ETVFLIWNSLNDPLFGWLS) form a helical membrane-spanning segment. The Extracellular portion of the chain corresponds to 74-98 (DRVFLSTQQPGAEISSPEVVLKRLR). The chain crosses the membrane as a helical span at residues 99 to 116 (ALSHNGPLFAISFLAFWV). The Cytoplasmic portion of the chain corresponds to 117–124 (AWAHPGLQ). Residues 125 to 149 (FLLCLCMYDSFLTMVDLHHNALLAD) form a helical membrane-spanning segment. At 150–153 (LAVS) the chain is on the extracellular side. A helical transmembrane segment spans residues 154–177 (AKDRTSLNFYCSFFSAIGSLSVFM). Topologically, residues 178–189 (SYAVWNKEDFFS) are cytoplasmic. A helical transmembrane segment spans residues 190 to 221 (FRIFCIVLAFCSIVGFTLSTQLLRQRFETDGK). Residues 222 to 259 (AKWDQESTLKELYIEKLSVPQEKRITLVEYLQQLSRHR) are Extracellular-facing. A helical transmembrane segment spans residues 260-287 (NFLWFVCMNLIQVFHCHFNSNFFPLFLE). The Cytoplasmic portion of the chain corresponds to 288 to 300 (HLLSDKISVSTGS). The helical transmembrane segment at 301–320 (FLLGISYIAPHLNNLYFLSL) threads the bilayer. Topologically, residues 321 to 325 (CRRWG) are extracellular. The chain crosses the membrane as a helical span at residues 326–345 (VYAVVRGLFFLKLALSVVML). Residues 346–353 (LAGPDQVY) lie on the Cytoplasmic side of the membrane. Residues 354-388 (LLCIFIASNRVFTEGTCKLLNLVVTDLVDEDLVLN) form a helical membrane-spanning segment. The Extracellular segment spans residues 389-397 (RRKQAASAL). The helical transmembrane segment at 398-424 (LFGMVALVTKPGQTFAPLIGTWLLCVY) threads the bilayer. The Cytoplasmic portion of the chain corresponds to 425–458 (TGYDIFQRNPLSNVVSAQPKLESDTILEPTLRQG). Residues 459–477 (CFYLLVFVPITCALLQLLS) traverse the membrane as a helical segment. The Extracellular portion of the chain corresponds to 478-509 (WTQFSLHGKRLQMVKAQRQGLMQGRAPEIKMI).

It is found in the cell membrane. The sequence is that of Transmembrane protein 180 from Gallus gallus (Chicken).